The following is a 203-amino-acid chain: Urease accessory protein UreG (203 aa).

Residue 14–21 (GPVGAGKT) participates in GTP binding.

Belongs to the SIMIBI class G3E GTPase family. UreG subfamily. In terms of assembly, homodimer. UreD, UreF and UreG form a complex that acts as a GTP-hydrolysis-dependent molecular chaperone, activating the urease apoprotein by helping to assemble the nickel containing metallocenter of UreC. The UreE protein probably delivers the nickel.

It localises to the cytoplasm. Its function is as follows. Facilitates the functional incorporation of the urease nickel metallocenter. This process requires GTP hydrolysis, probably effectuated by UreG. The polypeptide is Urease accessory protein UreG (Jannaschia sp. (strain CCS1)).